A 678-amino-acid chain; its full sequence is MTAPGFVEFPDSPFHLYQPYPPAGDQPGAIDALTEGVSDGLMFQTLLGVTGSGKTYTMANMIARLGRPALVLAPNKTLAAQLYAEMREFFPRNAVEYFVSYYDYYQPEAYVPTRDLFIEKDSSINEHIEQMRLSATKSLLERRDTVIVGTVSCIYGIGNPGDYHAMVLILRTGDRISRREVLARLVAMQYTRNDADFTRGVFRVRCETIDIFPAESPELALRLTLFDDEIESLELFDPLTGRVRQKLPRFTVYPGSHYVTPRETVLRAIETIKEELRERLAQLIADGKLVEAQRLEQRTRFDLEMLQELGFCKGIENYSRHLSGAAPGEPPPTLIDYLPADALMFIDESHVTIGQLGGMYRGDRSRKETLVQYGFRLPSALDNRPLRLEEFEARMRQCVFVSATPAAYEQEHADNVVEQVVRPTGLVDPIVEVRPAHTQVDDLLGEIHKRAALQERVLVTTLTKRMAEDLTDFLSEHGVRVRYLHSDIDTVERVEIIRDLRLGVFDVLVGINLLREGLDIPEVSLVAILDADKEGFLRSERSLIQTIGRAARNLNGRAILYADRITDSMRRAIDETERRRAKQIQHNTDHGITARGVSKAVRELIDGVVAPAGHDALESAVPAEVLTDEKAMAREIRRLEKLMMDHARNLEFEQAAAARDALNALKSRLLLDGVGWSG.

The region spanning 35–422 (EGVSDGLMFQ…ADNVVEQVVR (388 aa)) is the Helicase ATP-binding domain. Position 48–55 (48–55 (GVTGSGKT)) interacts with ATP. The Beta-hairpin motif lies at 101-124 (YYDYYQPEAYVPTRDLFIEKDSSI). Residues 439–605 (QVDDLLGEIH…GVSKAVRELI (167 aa)) enclose the Helicase C-terminal domain. The UVR domain maps to 633–668 (AREIRRLEKLMMDHARNLEFEQAAAARDALNALKSR).

It belongs to the UvrB family. As to quaternary structure, forms a heterotetramer with UvrA during the search for lesions. Interacts with UvrC in an incision complex.

Its subcellular location is the cytoplasm. Its function is as follows. The UvrABC repair system catalyzes the recognition and processing of DNA lesions. A damage recognition complex composed of 2 UvrA and 2 UvrB subunits scans DNA for abnormalities. Upon binding of the UvrA(2)B(2) complex to a putative damaged site, the DNA wraps around one UvrB monomer. DNA wrap is dependent on ATP binding by UvrB and probably causes local melting of the DNA helix, facilitating insertion of UvrB beta-hairpin between the DNA strands. Then UvrB probes one DNA strand for the presence of a lesion. If a lesion is found the UvrA subunits dissociate and the UvrB-DNA preincision complex is formed. This complex is subsequently bound by UvrC and the second UvrB is released. If no lesion is found, the DNA wraps around the other UvrB subunit that will check the other stand for damage. This is UvrABC system protein B from Bordetella pertussis (strain Tohama I / ATCC BAA-589 / NCTC 13251).